A 447-amino-acid polypeptide reads, in one-letter code: Selenide, water dikinase 3 (447 aa).

Residue Sec-50 is part of the active site. Sec-50 is a non-standard amino acid (selenocysteine). Residues Lys-53, 103 to 105, Asp-123, Asp-146, and 197 to 200 contribute to the ATP site; these read GMD and GGQT. Asp-105 contacts Mg(2+). Residue Asp-146 coordinates Mg(2+). Mg(2+) is bound at residue Asp-301.

This sequence belongs to the selenophosphate synthase 1 family. In terms of assembly, homodimer. It depends on Mg(2+) as a cofactor. As to expression, in the embryo, expressed in retina, olfactory vesicles, tectum, pronephros ducts and myotomes at 24 hours post-fertilization and in retina, tectum, liver and intestinal bulb 3 days after fertilization.

The enzyme catalyses hydrogenselenide + ATP + H2O = selenophosphate + AMP + phosphate + 2 H(+). In terms of biological role, synthesizes selenophosphate from selenide and ATP. The polypeptide is Selenide, water dikinase 3 (Danio rerio (Zebrafish)).